The following is a 639-amino-acid chain: Transcription factor phomR' (639 aa).

The segment at residues Cys14 to Cys41 is a DNA-binding region (zn(2)-C6 fungal-type). Disordered stretches follow at residues Arg58 to Gly136 and Leu476 to Glu499. The span at Ser68 to Ser108 shows a compositional bias: low complexity.

It localises to the nucleus. Its function is as follows. Transcription factor; part of the gene cluster that mediates the biosynthesis of the phomopsins, a group of hexapeptide mycotoxins which infects lupins and causes lupinosis disease in livestock. May play a role in the regulation of the production of phomopsins. The chain is Transcription factor phomR' from Diaporthe leptostromiformis (Lupinosis disease fungus).